The chain runs to 346 residues: Putative transmembrane protein ORF346 (346 aa).

Transmembrane regions (helical) follow at residues 67 to 87 (LPIILLFVASVPARFIYCIVY), 104 to 124 (IINPILDFFTAPLVYLAVGLT), 134 to 154 (PPYLIGVLTDACLPGIVSGIY), 156 to 176 (AIGDIFYTIGYGIGFILGLFI), 181 to 201 (IILYSICTLVTFGLTFGLCLS), and 219 to 241 (YPFSFLAGLLQNYINCGCVLGSY). Residues 294–346 (SEYPHSENGSGGSGGSGSGSGSGGSGSGGNSGSGGSGSGSSGSGGNSGSGNNG) are disordered. Over residues 302–346 (GSGGSGGSGSGSGSGGSGSGGNSGSGGSGSGSSGSGGNSGSGNNG) the composition is skewed to gly residues.

The protein resides in the host membrane. The chain is Putative transmembrane protein ORF346 from Acidianus bottle-shaped virus (isolate Italy/Pozzuoli) (ABV).